The sequence spans 304 residues: D-alanine--D-alanine ligase (304 aa).

Residues 107 to 300 form the ATP-grasp domain; it reads KRLWQGSGLP…FDELVARILG (194 aa). An ATP-binding site is contributed by 134–186; it reads VGYPVIVKPAREGSSLGMSRVEGPEELAEAYRVAAAYDDTVLAEAWVEGEEYT. The Mg(2+) site is built by Asp254, Glu267, and Asn269.

Belongs to the D-alanine--D-alanine ligase family. Mg(2+) serves as cofactor. Requires Mn(2+) as cofactor.

Its subcellular location is the cytoplasm. The enzyme catalyses 2 D-alanine + ATP = D-alanyl-D-alanine + ADP + phosphate + H(+). It participates in cell wall biogenesis; peptidoglycan biosynthesis. In terms of biological role, cell wall formation. This is D-alanine--D-alanine ligase from Halorhodospira halophila (strain DSM 244 / SL1) (Ectothiorhodospira halophila (strain DSM 244 / SL1)).